Consider the following 161-residue polypeptide: UPF0763 protein Cla_1130 (161 aa).

This sequence belongs to the UPF0763 family.

The polypeptide is UPF0763 protein Cla_1130 (Campylobacter lari (strain RM2100 / D67 / ATCC BAA-1060)).